A 484-amino-acid chain; its full sequence is Glutathione reductase (484 aa).

FAD contacts are provided by Ser-32 and Gly-33. A glutathione-binding site is contributed by Ser-32. Arg-39 serves as a coordination point for glutathione. FAD is bound by residues Glu-52, Thr-59, Cys-60, and Lys-68. Cys-60 and Cys-65 form a disulfide bridge. Residue Tyr-122 participates in glutathione binding. An FAD-binding site is contributed by Ala-138. Residues Ala-204, Ile-207, Glu-210, Arg-227, and Arg-233 each contribute to the NADP(+) site. Glutathione is bound at residue Thr-242. Gly-293 lines the NADP(+) pocket. Asp-333 is an FAD binding site. Glu-339 contacts NADP(+). Position 341 (Thr-341) interacts with FAD. Arg-349 contributes to the glutathione binding site. Position 374 (Val-374) interacts with NADP(+). Lys-426 contacts glutathione. FAD is bound at residue His-473. Catalysis depends on His-473, which acts as the Proton acceptor.

The protein belongs to the class-I pyridine nucleotide-disulfide oxidoreductase family. Homodimer. FAD serves as cofactor.

The protein resides in the cytoplasm. It is found in the mitochondrion. It carries out the reaction 2 glutathione + NADP(+) = glutathione disulfide + NADPH + H(+). Its function is as follows. Catalyzes the reduction of glutathione disulfide (GSSG) to reduced glutathione (GSH). Constitutes the major mechanism to maintain a high GSH:GSSG ratio in the cytosol. In Kluyveromyces lactis (strain ATCC 8585 / CBS 2359 / DSM 70799 / NBRC 1267 / NRRL Y-1140 / WM37) (Yeast), this protein is Glutathione reductase (GLR1).